The sequence spans 691 residues: Elongation factor G (691 aa).

Residues asparagine 12–leucine 286 enclose the tr-type G domain. GTP contacts are provided by residues alanine 21–threonine 28, aspartate 85–histidine 89, and asparagine 139–aspartate 142.

The protein belongs to the TRAFAC class translation factor GTPase superfamily. Classic translation factor GTPase family. EF-G/EF-2 subfamily.

Its subcellular location is the cytoplasm. In terms of biological role, catalyzes the GTP-dependent ribosomal translocation step during translation elongation. During this step, the ribosome changes from the pre-translocational (PRE) to the post-translocational (POST) state as the newly formed A-site-bound peptidyl-tRNA and P-site-bound deacylated tRNA move to the P and E sites, respectively. Catalyzes the coordinated movement of the two tRNA molecules, the mRNA and conformational changes in the ribosome. The protein is Elongation factor G of Fervidobacterium nodosum (strain ATCC 35602 / DSM 5306 / Rt17-B1).